We begin with the raw amino-acid sequence, 194 residues long: Peptidyl-tRNA hydrolase (194 aa).

TRNA is bound at residue Y16. The Proton acceptor role is filled by H21. TRNA is bound by residues F66, N68, and N114.

The protein belongs to the PTH family. As to quaternary structure, monomer.

The protein resides in the cytoplasm. The enzyme catalyses an N-acyl-L-alpha-aminoacyl-tRNA + H2O = an N-acyl-L-amino acid + a tRNA + H(+). Its function is as follows. Hydrolyzes ribosome-free peptidyl-tRNAs (with 1 or more amino acids incorporated), which drop off the ribosome during protein synthesis, or as a result of ribosome stalling. Catalyzes the release of premature peptidyl moieties from peptidyl-tRNA molecules trapped in stalled 50S ribosomal subunits, and thus maintains levels of free tRNAs and 50S ribosomes. This chain is Peptidyl-tRNA hydrolase, found in Geobacter metallireducens (strain ATCC 53774 / DSM 7210 / GS-15).